A 155-amino-acid chain; its full sequence is Endoribonuclease YbeY (155 aa).

3 residues coordinate Zn(2+): histidine 114, histidine 118, and histidine 124.

This sequence belongs to the endoribonuclease YbeY family. The cofactor is Zn(2+).

The protein resides in the cytoplasm. In terms of biological role, single strand-specific metallo-endoribonuclease involved in late-stage 70S ribosome quality control and in maturation of the 3' terminus of the 16S rRNA. This Escherichia coli O7:K1 (strain IAI39 / ExPEC) protein is Endoribonuclease YbeY.